The primary structure comprises 190 residues: Glutathione peroxidase 2 (190 aa).

Residue Sec40 is part of the active site. Position 40 (Sec40) is a non-standard amino acid, selenocysteine.

Belongs to the glutathione peroxidase family. As to quaternary structure, homotetramer.

It is found in the cytoplasm. The protein resides in the cytosol. The catalysed reaction is 2 glutathione + H2O2 = glutathione disulfide + 2 H2O. The enzyme catalyses a hydroperoxy polyunsaturated fatty acid + 2 glutathione = a hydroxy polyunsaturated fatty acid + glutathione disulfide + H2O. It carries out the reaction tert-butyl hydroperoxide + 2 glutathione = tert-butanol + glutathione disulfide + H2O. It catalyses the reaction cumene hydroperoxide + 2 glutathione = 2-phenylpropan-2-ol + glutathione disulfide + H2O. The catalysed reaction is (13S)-hydroperoxy-(9Z,11E)-octadecadienoate + 2 glutathione = (13S)-hydroxy-(9Z,11E)-octadecadienoate + glutathione disulfide + H2O. The enzyme catalyses (5S)-hydroperoxy-(6E,8Z,11Z,14Z)-eicosatetraenoate + 2 glutathione = (5S)-hydroxy-(6E,8Z,11Z,14Z)-eicosatetraenoate + glutathione disulfide + H2O. It carries out the reaction (12R)-hydroperoxy-(5Z,8Z,10E,14Z)-eicosatetraenoate + 2 glutathione = (12R)-hydroxy-(5Z,8Z,10E,14Z)-eicosatetraenoate + glutathione disulfide + H2O. It catalyses the reaction (15S)-hydroperoxy-(5Z,8Z,11Z,13E)-eicosatetraenoate + 2 glutathione = (15S)-hydroxy-(5Z,8Z,11Z,13E)-eicosatetraenoate + glutathione disulfide + H2O. In terms of biological role, catalyzes the reduction of hydroperoxides in a glutathione-dependent manner thus regulating cellular redox homeostasis. Can reduce small soluble hydroperoxides such as H2O2, cumene hydroperoxide and tert-butyl hydroperoxide, as well as several fatty acid-derived hydroperoxides. Cannot reduce phosphatidycholine hydroperoxide. The chain is Glutathione peroxidase 2 (GPX2) from Sapajus apella (Brown-capped capuchin).